We begin with the raw amino-acid sequence, 410 residues long: Single Ig IL-1-related receptor (410 aa).

The Extracellular portion of the chain corresponds to 1 to 118; it reads MPGVCDRAPD…TLQRAGPTSH (118 aa). Positions 9–109 constitute an Ig-like C2-type domain; the sequence is PDFLSPSEDQ…IQNISFSSFT (101 aa). Asparagine 31, asparagine 73, asparagine 86, and asparagine 102 each carry an N-linked (GlcNAc...) asparagine glycan. An intrachain disulfide couples cysteine 32 to cysteine 98. A helical; Signal-anchor for type III membrane protein transmembrane segment spans residues 119-139; that stretch reads VAAVLASLLVLLALLLAALLY. The Cytoplasmic portion of the chain corresponds to 140–410; it reads VKCRLNVLLW…FYCLVSKDDM (271 aa). The TIR domain maps to 163–307; it reads KLYDAYVSYS…DFWKEVQLAL (145 aa). Residues 340–390 are disordered; that stretch reads EGRALDSEVDPDPEGDLGVRGPVFGEPSAPPHTSGVSLGESRSSEVDVSDL. Residue serine 383 is modified to Phosphoserine.

This sequence belongs to the interleukin-1 receptor family. Interacts with IL1R1, IRAK1, TLR4, TLR5, TLR9 and TRAF6. Upon IL-1 stimulation found in a complex at least composed of IL1R1, SIGIRR, MYD88, IRAK1 and TRAF6. Upon stimulation with LPC found in a complex at least composed of TLR4, SIG1IR, MYD88, IRAK1 and TRAF6. Interacts with PALM3. Mainly expressed in epithelial tissues such as kidney, lung and gut.

Its subcellular location is the membrane. In terms of biological role, acts as a negative regulator of the Toll-like and IL-1R receptor signaling pathways. Attenuates the recruitment of receptor-proximal signaling components to the TLR4 receptor, probably through an TIR-TIR domain interaction with TLR4. Through its extracellular domain interferes with the heterodimerization of Il1R1 and IL1RAP. In Homo sapiens (Human), this protein is Single Ig IL-1-related receptor (SIGIRR).